Reading from the N-terminus, the 179-residue chain is Large ribosomal subunit protein uL5 (179 aa).

Belongs to the universal ribosomal protein uL5 family. Part of the 50S ribosomal subunit; part of the 5S rRNA/L5/L18/L25 subcomplex. Contacts the 5S rRNA and the P site tRNA. Forms a bridge to the 30S subunit in the 70S ribosome.

This is one of the proteins that bind and probably mediate the attachment of the 5S RNA into the large ribosomal subunit, where it forms part of the central protuberance. In the 70S ribosome it contacts protein S13 of the 30S subunit (bridge B1b), connecting the 2 subunits; this bridge is implicated in subunit movement. Contacts the P site tRNA; the 5S rRNA and some of its associated proteins might help stabilize positioning of ribosome-bound tRNAs. The chain is Large ribosomal subunit protein uL5 from Rickettsia africae (strain ESF-5).